The following is a 116-amino-acid chain: Large ribosomal subunit protein eL22B (116 aa).

It belongs to the eukaryotic ribosomal protein eL22 family.

This Dictyostelium discoideum (Social amoeba) protein is Large ribosomal subunit protein eL22B (rpl22a).